A 275-amino-acid polypeptide reads, in one-letter code: Interleukin-2 receptor subunit alpha (275 aa).

The signal sequence occupies residues 1–21 (MEPSLLMWRFFVFIVVPGCVT). The region spanning 22 to 81 (EACHDDPPSLRNAMFKVFRYEVGTMINCDCKTGFRRVSAVMRCVGDSSHSAWENRCFCNS) is the Sushi 1 domain. Residues 22-243 (EACHDDPPSL…DTFIFTTEYQ (222 aa)) lie on the Extracellular side of the membrane. 3 disulfide bridges follow: C24–C64, C49–C77, and C51–C79. N80 carries N-linked (GlcNAc...) asparagine glycosylation. The interval 88–130 (QVKQVTPAPEEHREKKHTDAQNQTQPPEEADLPGHCEEPPPWE) is disordered. Residues 96–106 (PEEHREKKHTD) are compositionally biased toward basic and acidic residues. Residue N109 is glycosylated (N-linked (GlcNAc...) asparagine). Positions 119-130 (LPGHCEEPPPWE) are enriched in basic and acidic residues. In terms of domain architecture, Sushi 2 spans 121-186 (GHCEEPPPWE…WTRPRLKCIR (66 aa)). Cystine bridges form between C123–C168 and C152–C184. The disordered stretch occupies residues 188–221 (GEHGQASDDAEPQESTEAPPGSGTFLPTRMAGTT). Residues 244–262 (IAVAGCTLLLASILLLSCL) traverse the membrane as a helical segment. Residues 263–275 (TWQRKWKKNRRTI) lie on the Cytoplasmic side of the membrane.

As to quaternary structure, non-covalent dimer of an alpha and a beta subunit. IL2R exists in 3 different forms: a high affinity dimer, an intermediate affinity monomer (beta subunit), and a low affinity monomer (alpha subunit). The high and intermediate affinity forms also associate with a gamma subunit.

It is found in the membrane. In terms of biological role, receptor for interleukin-2. The receptor is involved in the regulation of immune tolerance by controlling regulatory T cells (TREGs) activity. TREGs suppress the activation and expansion of autoreactive T-cells. This Bos taurus (Bovine) protein is Interleukin-2 receptor subunit alpha (IL2RA).